A 746-amino-acid polypeptide reads, in one-letter code: Exostosin-1 (746 aa).

Topologically, residues Met1–Tyr7 are cytoplasmic. The helical; Signal-anchor for type II membrane protein transmembrane segment at Phe8–Phe28 threads the bilayer. Topologically, residues Arg29–Leu746 are lumenal. N-linked (GlcNAc...) asparagine glycosylation occurs at Asn89. Cystine bridges form between Cys98–Cys103 and Cys109–Cys152. Leu166 and Tyr203 together coordinate a protein. UDP is bound by residues Lys267, Lys269, Tyr271, and Arg280. Cys298 and Cys312 are oxidised to a cystine. His300 lines the a protein pocket. The UDP site is built by Tyr319 and Tyr324. Asn330 is a glycosylation site (N-linked (GlcNAc...) asparagine). 2 cysteine pairs are disulfide-bonded: Cys334/Cys355 and Cys652/Cys704. Positions 346 and 349 each coordinate UDP.

The protein belongs to the glycosyltransferase 47 family. As to quaternary structure, part of the heparan sulfate polymerase, a dimeric complex composed of EXT1 and EXT2. Could also form homooligomeric complexes. Interacts with NDST1. In terms of processing, N-glycosylated.

The protein resides in the golgi apparatus membrane. Its subcellular location is the golgi apparatus. The protein localises to the cis-Golgi network membrane. It is found in the endoplasmic reticulum membrane. It carries out the reaction 3-O-{alpha-D-GlcNAc-[(1-&gt;4)-beta-D-GlcA-(1-&gt;4)-alpha-D-GlcNAc](n)-(1-&gt;4)-beta-D-GlcA-(1-&gt;3)-beta-D-Gal-(1-&gt;3)-beta-D-Gal-(1-&gt;4)-beta-D-Xyl}-L-seryl-[protein] + UDP-alpha-D-glucuronate = 3-O-{[(1-&gt;4)-beta-D-GlcA-(1-&gt;4)-alpha-D-GlcNAc](n+1)-(1-&gt;4)-beta-D-GlcA-(1-&gt;3)-beta-D-Gal-(1-&gt;3)-beta-D-Gal-(1-&gt;4)-beta-D-Xyl}-L-seryl-[protein] + UDP + H(+). It participates in protein modification; protein glycosylation. Glycosyltransferase forming with EXT2 the heterodimeric heparan sulfate polymerase which catalyzes the elongation of the heparan sulfate glycan backbone. Glycan backbone extension consists in the alternating transfer of (1-&gt;4)-beta-D-GlcA and (1-&gt;4)-alpha-D-GlcNAc residues from their respective UDP-sugar donors. Both EXT1 and EXT2 are required for the full activity of the polymerase since EXT1 bears the N-acetylglucosaminyl-proteoglycan 4-beta-glucuronosyltransferase activity within the complex while EXT2 carries the glucuronosyl-N-acetylglucosaminyl-proteoglycan 4-alpha-N-acetylglucosaminyltransferase activity. Heparan sulfate proteoglycans are ubiquitous components of the extracellular matrix and play an important role in tissue homeostasis and signaling. The protein is Exostosin-1 (EXT1) of Bos taurus (Bovine).